Here is a 187-residue protein sequence, read N- to C-terminus: Peptidyl-tRNA hydrolase (187 aa).

Tyr16 provides a ligand contact to tRNA. The active-site Proton acceptor is His21. 3 residues coordinate tRNA: Tyr66, Asn68, and Asn114.

It belongs to the PTH family. Monomer.

It localises to the cytoplasm. It catalyses the reaction an N-acyl-L-alpha-aminoacyl-tRNA + H2O = an N-acyl-L-amino acid + a tRNA + H(+). Its function is as follows. Hydrolyzes ribosome-free peptidyl-tRNAs (with 1 or more amino acids incorporated), which drop off the ribosome during protein synthesis, or as a result of ribosome stalling. Functionally, catalyzes the release of premature peptidyl moieties from peptidyl-tRNA molecules trapped in stalled 50S ribosomal subunits, and thus maintains levels of free tRNAs and 50S ribosomes. The polypeptide is Peptidyl-tRNA hydrolase (Malacoplasma penetrans (strain HF-2) (Mycoplasma penetrans)).